The primary structure comprises 405 residues: Terminal uridylyltransferase cid1 (405 aa).

S90 is a UTP binding site. Residues D101 and D103 each coordinate Mg(2+). UTP is bound by residues A168, N171, T172, K193, K197, S211, Y212, and H336. Residues S267 to H336 form the PAP-associated domain. R340 is a binding site for ATP. The tract at residues A377–E405 is disordered. Residues K386–N397 are compositionally biased toward basic and acidic residues.

The protein belongs to the DNA polymerase type-B-like family. Mg(2+) serves as cofactor. Mn(2+) is required as a cofactor.

It localises to the cytoplasm. The enzyme catalyses RNA(n) + UTP = RNA(n)-3'-uridine ribonucleotide + diphosphate. It carries out the reaction RNA(n) + ATP = RNA(n)-3'-adenine ribonucleotide + diphosphate. Cytoplasmic uridylyltransferase that mediates the terminal uridylation of mRNAs with short poly(A) tails such as such as act1, hcn1 and urg1 mRNAs, hence facilitating global mRNA decay. Uridylates the 3' ends of actin mRNAs upon S-phase arrest. Also has a weak poly(A) polymerase (PAP) activity. Residue His-336 is responsible for the specificity for UTP. Involved in cell cycle arrest where in association with crb2/rhp9 and chk1 it inhibits unscheduled mitosis. This chain is Terminal uridylyltransferase cid1, found in Schizosaccharomyces pombe (strain 972 / ATCC 24843) (Fission yeast).